A 67-amino-acid chain; its full sequence is Moricin (67 aa).

A signal peptide spans 1 to 23 (MKLTSLFIFVIVALSLLFSSTDA).

The protein belongs to the moricin family. Monomer.

The protein resides in the secreted. Antimicrobial peptide. Active against a broad spectrum of Gram-positive and Gram-negative bacteria including methicillin-resistant S.aureus ATCC 43 300, S.aureus BAA-39, pathogenic strains of L.monocytogenes, K.pneumoniae, E.coli O157:H7, S.typhimurium and multidrug-resistant S.typhimurium DT104 with minimum inhibitory concentration (MIC) of 1.4 uM for all except for S.aureus BAA-39. Also active against Serratia marcescens. Probably acts by disturbing membrane functions with its amphipathic alpha-helical structure. May protect a developing embryo from bacterial infection. In Manduca sexta (Tobacco hawkmoth), this protein is Moricin.